A 445-amino-acid polypeptide reads, in one-letter code: 2-oxoisovalerate dehydrogenase subunit alpha, mitochondrial (445 aa).

Residues 1–45 constitute a mitochondrion transit peptide; that stretch reads MAVAIAAARVWRPNRGLSQAALLLLWRPGARGLARSHPHRQQQQF. Positions 158 and 159 each coordinate thiamine diphosphate. Ser-206 is a K(+) binding site. Ser-207 is a thiamine diphosphate binding site. Residues Pro-208, Thr-211, and Gln-212 each contribute to the K(+) site. Glu-238 contributes to the Mg(2+) binding site. Gly-239, Ala-240, and Arg-265 together coordinate thiamine diphosphate. Positions 267 and 269 each coordinate Mg(2+). Residue His-336 participates in thiamine diphosphate binding. Ser-337 bears the Phosphoserine; by BCKDK mark. Residue Thr-338 is modified to Phosphothreonine. A phosphoserine mark is found at Ser-339 and Ser-347. Lys-356 carries the post-translational modification N6-acetyllysine; alternate. Lys-356 carries the N6-succinyllysine; alternate modification. Lys-380 carries the N6-succinyllysine modification.

The protein belongs to the BCKDHA family. Heterotetramer of 2 alpha/BCKDHA and 2 beta chains/BCKDHB that forms the branched-chain alpha-keto acid decarboxylase (E1) component of the BCKD complex. The branched-chain alpha-ketoacid dehydrogenase is a large complex composed of three major building blocks E1, E2 and E3. It is organized around E2, a 24-meric cubic core composed of DBT, to which are associated 6 to 12 copies of E1, and approximately 6 copies of the dehydrogenase E3, a DLD dimer. Interacts with PPM1K. Thiamine diphosphate serves as cofactor. The cofactor is Mg(2+). Phosphorylated at Ser-337 by BCKDK and dephosphorylated by protein phosphatase PPM1K.

The protein resides in the mitochondrion matrix. The enzyme catalyses N(6)-[(R)-lipoyl]-L-lysyl-[protein] + 3-methyl-2-oxobutanoate + H(+) = N(6)-[(R)-S(8)-2-methylpropanoyldihydrolipoyl]-L-lysyl-[protein] + CO2. Its function is as follows. Together with BCKDHB forms the heterotetrameric E1 subunit of the mitochondrial branched-chain alpha-ketoacid dehydrogenase (BCKD) complex. The BCKD complex catalyzes the multi-step oxidative decarboxylation of alpha-ketoacids derived from the branched-chain amino-acids valine, leucine and isoleucine producing CO2 and acyl-CoA which is subsequently utilized to produce energy. The E1 subunit catalyzes the first step with the decarboxylation of the alpha-ketoacid forming an enzyme-product intermediate. A reductive acylation mediated by the lipoylamide cofactor of E2 extracts the acyl group from the E1 active site for the next step of the reaction. This is 2-oxoisovalerate dehydrogenase subunit alpha, mitochondrial (BCKDHA) from Macaca fascicularis (Crab-eating macaque).